The primary structure comprises 627 residues: Membrane protein insertase YidC (627 aa).

Helical transmembrane passes span 3-23 (KNTVIGLVLIGLVIFGFSWLN), 376-396 (WGLIILLLTLGIKLLISPLAY), 450-470 (LPMLLQFPFLIAMYMYFPTTI), 502-522 (FYGNHVSLFCLLMSISNILYI), 534-554 (EGMAMLKWMPYITTVMFLFFF), and 558-578 (ASGLCYYYFLSSIITVIQYMS).

It belongs to the OXA1/ALB3/YidC family. Type 1 subfamily. As to quaternary structure, interacts with the Sec translocase complex via SecD. Specifically interacts with transmembrane segments of nascent integral membrane proteins during membrane integration.

The protein resides in the cell inner membrane. Its function is as follows. Required for the insertion and/or proper folding and/or complex formation of integral membrane proteins into the membrane. Involved in integration of membrane proteins that insert both dependently and independently of the Sec translocase complex, as well as at least some lipoproteins. Aids folding of multispanning membrane proteins. The protein is Membrane protein insertase YidC of Porphyromonas gingivalis (strain ATCC 33277 / DSM 20709 / CIP 103683 / JCM 12257 / NCTC 11834 / 2561).